Reading from the N-terminus, the 133-residue chain is Profilin Sal k 4.0301 (133 aa).

A disulfide bridge connects residues Cys-95 and Cys-117.

This sequence belongs to the profilin family. In terms of assembly, occurs in many kinds of cells as a complex with monomeric actin in a 1:1 ratio. In terms of tissue distribution, expressed in pollen (at protein and mRNA level).

The protein resides in the cytoplasm. It is found in the cytoskeleton. In terms of biological role, binds to actin and affects the structure of the cytoskeleton. At high concentrations, profilin prevents the polymerization of actin, whereas it enhances it at low concentrations. In Kali turgidum (Prickly saltwort), this protein is Profilin Sal k 4.0301.